We begin with the raw amino-acid sequence, 149 residues long: 3-dehydroquinate dehydratase (149 aa).

The active-site Proton acceptor is Tyr22. The substrate site is built by Asn73, His79, and Asp86. Catalysis depends on His99, which acts as the Proton donor. Residues 100–101 (LS) and Arg110 each bind substrate.

It belongs to the type-II 3-dehydroquinase family. In terms of assembly, homododecamer.

The catalysed reaction is 3-dehydroquinate = 3-dehydroshikimate + H2O. It participates in metabolic intermediate biosynthesis; chorismate biosynthesis; chorismate from D-erythrose 4-phosphate and phosphoenolpyruvate: step 3/7. Catalyzes a trans-dehydration via an enolate intermediate. The chain is 3-dehydroquinate dehydratase from Prochlorococcus marinus (strain MIT 9313).